The following is a 277-amino-acid chain: Phosphate import ATP-binding protein PstB 2 (277 aa).

Positions 31–272 constitute an ABC transporter domain; the sequence is IEVPGLSLFY…PAKKQTEDYI (242 aa). Position 63-70 (63-70) interacts with ATP; sequence GPSGCGKS.

The protein belongs to the ABC transporter superfamily. Phosphate importer (TC 3.A.1.7) family. The complex is composed of two ATP-binding proteins (PstB), two transmembrane proteins (PstC and PstA) and a solute-binding protein (PstS).

Its subcellular location is the cell inner membrane. The catalysed reaction is phosphate(out) + ATP + H2O = ADP + 2 phosphate(in) + H(+). Its function is as follows. Part of the ABC transporter complex PstSACB involved in phosphate import. Responsible for energy coupling to the transport system. The protein is Phosphate import ATP-binding protein PstB 2 of Pseudomonas syringae pv. tomato (strain ATCC BAA-871 / DC3000).